The primary structure comprises 372 residues: GTP cyclohydrolase 1 type 2 homolog (372 aa).

Residues histidine 67, histidine 68, aspartate 106, histidine 332, and glutamate 335 each contribute to the a divalent metal cation site.

Belongs to the GTP cyclohydrolase I type 2/NIF3 family. Homohexamer.

This Halalkalibacterium halodurans (strain ATCC BAA-125 / DSM 18197 / FERM 7344 / JCM 9153 / C-125) (Bacillus halodurans) protein is GTP cyclohydrolase 1 type 2 homolog.